The primary structure comprises 181 residues: MRILGIDPGLRTTGFGVLEKHGNKLAYVASGTIRSNGETSLPERLKTLYDGISEVARTYAPDCAAIEKVFVNVNPQSTLLLGQARGAAICGLVGQGLPVFEYTALQLKVAVVGYGRANKEQVQEMVMRLLSLSGRPSSDAADALGVAICHANGGDTLGTLAGLAPELARKGMRVRRGRLVG.

Catalysis depends on residues D7, E67, and D139. 3 residues coordinate Mg(2+): D7, E67, and D139.

Belongs to the RuvC family. In terms of assembly, homodimer which binds Holliday junction (HJ) DNA. The HJ becomes 2-fold symmetrical on binding to RuvC with unstacked arms; it has a different conformation from HJ DNA in complex with RuvA. In the full resolvosome a probable DNA-RuvA(4)-RuvB(12)-RuvC(2) complex forms which resolves the HJ. The cofactor is Mg(2+).

It is found in the cytoplasm. The catalysed reaction is Endonucleolytic cleavage at a junction such as a reciprocal single-stranded crossover between two homologous DNA duplexes (Holliday junction).. The RuvA-RuvB-RuvC complex processes Holliday junction (HJ) DNA during genetic recombination and DNA repair. Endonuclease that resolves HJ intermediates. Cleaves cruciform DNA by making single-stranded nicks across the HJ at symmetrical positions within the homologous arms, yielding a 5'-phosphate and a 3'-hydroxyl group; requires a central core of homology in the junction. The consensus cleavage sequence is 5'-(A/T)TT(C/G)-3'. Cleavage occurs on the 3'-side of the TT dinucleotide at the point of strand exchange. HJ branch migration catalyzed by RuvA-RuvB allows RuvC to scan DNA until it finds its consensus sequence, where it cleaves and resolves the cruciform DNA. The chain is Crossover junction endodeoxyribonuclease RuvC from Cupriavidus metallidurans (strain ATCC 43123 / DSM 2839 / NBRC 102507 / CH34) (Ralstonia metallidurans).